A 167-amino-acid polypeptide reads, in one-letter code: Probable glutathione peroxidase 8 (167 aa).

The active site involves C41.

Belongs to the glutathione peroxidase family.

The enzyme catalyses 2 glutathione + H2O2 = glutathione disulfide + 2 H2O. Its function is as follows. May constitute a glutathione peroxidase-like protective system against oxidative stresses. The polypeptide is Probable glutathione peroxidase 8 (GPX8) (Arabidopsis thaliana (Mouse-ear cress)).